We begin with the raw amino-acid sequence, 104 residues long: Large ribosomal subunit protein uL24 (104 aa).

This sequence belongs to the universal ribosomal protein uL24 family. As to quaternary structure, part of the 50S ribosomal subunit.

In terms of biological role, one of two assembly initiator proteins, it binds directly to the 5'-end of the 23S rRNA, where it nucleates assembly of the 50S subunit. Its function is as follows. One of the proteins that surrounds the polypeptide exit tunnel on the outside of the subunit. The protein is Large ribosomal subunit protein uL24 of Shewanella amazonensis (strain ATCC BAA-1098 / SB2B).